Reading from the N-terminus, the 359-residue chain is MLVSSNEEQLTAHTPTSSSSIEPKILAACSYSLSVGPCSLAVSPKGVNSKSPSLKNETAFVVDSVSTLSAESSALLYNTQSSLLTGLSMNGYLGEYQEDIIHHLITREKNFLLNVHLSNQQPELRWSMRPALVNFIVEIHNGFDLSIDTLPLSISLMDSYVSRRVVYCKHIQLVACVCLWIASKFHETEDRVPLLQELKLACKNIYAEDLFIRMERHILDTLDWDISIPTPASYIPVLDPIFFLVLDASMFVPNLFKFPASKIACSVMNIVNEHVGSFLLTHPSMESYRKDDNFLWPEDLDTVTSYMENMSKRYANEECTDLLFSSLGRISSILAKKYPEQCAMAAWCNMTEKDTERTL.

It belongs to the cyclin family.

Its function is as follows. Function in exit from the mitotic cycle. Contributes to negative regulation of the timing of sexual development in fission yeast, and functions at the transition between cycling and non-cycling cells. Interacts with protein kinase A. The polypeptide is Cyclin puc1 (puc1) (Schizosaccharomyces pombe (strain 972 / ATCC 24843) (Fission yeast)).